A 361-amino-acid chain; its full sequence is MAPSGSRSFDCWRVLYWIPVLFISLIVAWSYYAYVVQLCIETIENMGEKTVYLLIYHLLFLMFVWSYWQTIYSKPMNPLKEFHLSHVDKELLEREDRRESQQEILRRIAKDLPIYTRTMSGAIRYCDRCLLLKPDRCHHCSACDMCILKMDHHCPWVNNCVGFANYKFFMLFLAYSLLYCLFVTATDMQYFIQFWTNGLPDTQAKFHIMFLFFAASTFSVSLAFLFAYHCWLVCKNRSTLEAFRAPAFQHGTDKNGFSLGAYKNFRQVFGDEKKYWLLPIFSSLGDGCSFPTCLVNPDPEQPSIPPGRNPSVKSAGESHPFPPKPLRESQSRLLNNGQTDGSEDRDKRGTSNPALTIEKET.

Topologically, residues 1-15 (MAPSGSRSFDCWRVL) are cytoplasmic. A helical membrane pass occupies residues 16-36 (YWIPVLFISLIVAWSYYAYVV). The Lumenal segment spans residues 37–50 (QLCIETIENMGEKT). The helical transmembrane segment at 51-71 (VYLLIYHLLFLMFVWSYWQTI) threads the bilayer. Topologically, residues 72–167 (YSKPMNPLKE…NNCVGFANYK (96 aa)) are cytoplasmic. Residues 124–174 (RYCDRCLLLKPDRCHHCSACDMCILKMDHHCPWVNNCVGFANYKFFMLFLA) enclose the DHHC domain. Catalysis depends on C154, which acts as the S-palmitoyl cysteine intermediate. A helical transmembrane segment spans residues 168-188 (FFMLFLAYSLLYCLFVTATDM). Over 189–207 (QYFIQFWTNGLPDTQAKFH) the chain is Lumenal. A helical membrane pass occupies residues 208–228 (IMFLFFAASTFSVSLAFLFAY). Residues 229-361 (HCWLVCKNRS…NPALTIEKET (133 aa)) are Cytoplasmic-facing. Residues 296–361 (NPDPEQPSIP…NPALTIEKET (66 aa)) are mediates localization to plasma membrane and recycling endosomes. The span at 299 to 308 (PEQPSIPPGR) shows a compositional bias: pro residues. Residues 299 to 361 (PEQPSIPPGR…NPALTIEKET (63 aa)) are disordered. The span at 331–340 (SRLLNNGQTD) shows a compositional bias: polar residues. The short motif at 333–334 (LL) is the Non-canonical dileucine endocytic signal element. The NPxY-like endocytic signal signature appears at 352 to 355 (NPAL).

This sequence belongs to the DHHC palmitoyltransferase family. Monomer. Homodimer. The monomeric form has a higher catalytic activity. In terms of processing, autopalmitoylated.

The protein resides in the endoplasmic reticulum membrane. Its subcellular location is the golgi apparatus membrane. It localises to the postsynaptic density. The protein localises to the postsynaptic recycling endosome membrane. It is found in the cell membrane. The catalysed reaction is L-cysteinyl-[protein] + hexadecanoyl-CoA = S-hexadecanoyl-L-cysteinyl-[protein] + CoA. It carries out the reaction L-cysteinyl-[protein] + tetradecanoyl-CoA = S-tetradecanoyl-L-cysteinyl-[protein] + CoA. It catalyses the reaction L-cysteinyl-[protein] + octadecanoyl-CoA = S-octadecanoyl-L-cysteinyl-[protein] + CoA. Its function is as follows. Palmitoyltransferase that catalyzes the addition of palmitate onto various protein substrates and is involved in a variety of cellular processes. Has no stringent fatty acid selectivity and in addition to palmitate can also transfer onto target proteins myristate from tetradecanoyl-CoA and stearate from octadecanoyl-CoA. The polypeptide is Palmitoyltransferase ZDHHC2 (Danio rerio (Zebrafish)).